The chain runs to 224 residues: Heme response regulator HssR (224 aa).

The Response regulatory domain maps to 3-116 (KCLIVDDDYK…ELLFRIQAVL (114 aa)). The residue at position 52 (D52) is a 4-aspartylphosphate. A DNA-binding region (ompR/PhoB-type) is located at residues 124 to 222 (QDIIKLGNVT…VRGQGYRVIT (99 aa)).

In terms of processing, phosphorylated by HssS.

The protein localises to the cytoplasm. Functionally, member of the two-component regulatory system HssS/HssR involved in intracellular heme homeostasis and tempering of staphylococcal virulence. Phosphorylated HssR binds to a direct repeat sequence within hrtAB promoter and activates the expression of hrtAB, an efflux pump, in response to extracellular heme, hemin, hemoglobin or blood. The chain is Heme response regulator HssR (hssR) from Staphylococcus haemolyticus (strain JCSC1435).